Consider the following 43-residue polypeptide: CLAVATA3/ESR (CLE)-related protein 16D10 (43 aa).

Residues 1 to 30 form the signal peptide; sequence MFTNSIKNLIIYLMPLMVTLMLLSVSFVDA. Positions 31–43 match the CLE motif; that stretch reads GKKPSGPNPGGNN.

The protein belongs to the CLV3/ESR signal peptide family. In terms of tissue distribution, highly expressed exclusively within the subventral esophageal gland cell during syncytium formation in host plants.

The protein localises to the secreted. Its subcellular location is the host cytoplasm. It is found in the host extracellular space. Functionally, plays a role in the differentiation or division of feeding cells (syncytia) induced in plant roots during infection. Promotes host root growth. The protein is CLAVATA3/ESR (CLE)-related protein 16D10 (16D10) of Meloidogyne arenaria (Peanut root-knot nematode).